The chain runs to 145 residues: Small ribosomal subunit protein uS19 (145 aa).

Belongs to the universal ribosomal protein uS19 family. In terms of assembly, component of the small ribosomal subunit.

It localises to the cytoplasm. Component of the small ribosomal subunit. The ribosome is a large ribonucleoprotein complex responsible for the synthesis of proteins in the cell. The sequence is that of Small ribosomal subunit protein uS19 (rps15) from Xenopus laevis (African clawed frog).